The following is a 352-amino-acid chain: Rhodopsin (352 aa).

The Extracellular segment spans residues 1–36 (MNGTEGPFFYIPMVNTTGIVRSPYEYPQYYLVNPAA). 2 N-linked (GlcNAc...) asparagine glycosylation sites follow: Asn-2 and Asn-15. Residues 37–61 (YAALGAYMFFLILTGFPINFLTLYV) traverse the membrane as a helical segment. The Cytoplasmic portion of the chain corresponds to 62-73 (TLEHKKLRTALN). The helical transmembrane segment at 74–96 (LILLNLAVADLFMVFGGFTTTMY) threads the bilayer. At 97 to 110 (TSMHGYFVLGRLGC) the chain is on the extracellular side. Cys-110 and Cys-187 are disulfide-bonded. A helical membrane pass occupies residues 111-133 (NVEGFFATLGGEIALWSLVVLAV). The 'Ionic lock' involved in activated form stabilization motif lies at 134-136 (ERW). The Cytoplasmic segment spans residues 134–152 (ERWVVVCKPISNFRFTENH). Residues 153-173 (AIMGVAFSWIMAATCAVPPLV) traverse the membrane as a helical segment. At 174–202 (GWSRYIPEGMQCSCGVDYYTRAEGFNNES) the chain is on the extracellular side. The helical transmembrane segment at 203–224 (FVIYMFIVHFLAPLIVIFFCYG) threads the bilayer. Residues 225–252 (RLLCAVKEAAAAQQESETTQRAEREVTR) are Cytoplasmic-facing. Residues 253 to 274 (MVIIMVIGFLTSWLPYASVAWY) form a helical membrane-spanning segment. The Extracellular portion of the chain corresponds to 275-286 (IFTHQGTEFGPL). Residues 287-308 (FMTIPAFFAKSSALYNPMIYIC) traverse the membrane as a helical segment. Lys-296 bears the N6-(retinylidene)lysine mark. The Cytoplasmic segment spans residues 309–352 (MNKQFRHCMITTLCCGKNPFEEEEGASTTKTEASSVSSSSVSPA). 2 S-palmitoyl cysteine lipidation sites follow: Cys-322 and Cys-323. The interval 331 to 352 (EEGASTTKTEASSVSSSSVSPA) is disordered. A compositionally biased stretch (low complexity) spans 342–352 (SSVSSSSVSPA).

It belongs to the G-protein coupled receptor 1 family. Opsin subfamily. Post-translationally, phosphorylated on some or all of the serine and threonine residues present in the C-terminal region. Contains one covalently linked retinal chromophore.

The protein localises to the membrane. It localises to the cell projection. Its subcellular location is the cilium. The protein resides in the photoreceptor outer segment. In terms of biological role, photoreceptor required for image-forming vision at low light intensity. While most salt water fish species use retinal as chromophore, most freshwater fish use 3-dehydroretinal, or a mixture of retinal and 3-dehydroretinal. Light-induced isomerization of 11-cis to all-trans retinal triggers a conformational change that activates signaling via G-proteins. Subsequent receptor phosphorylation mediates displacement of the bound G-protein alpha subunit by arrestin and terminates signaling. The polypeptide is Rhodopsin (rho) (Pomatoschistus minutus (Sand goby)).